The following is a 562-amino-acid chain: Putative transport protein NT01EI_2530 (562 aa).

The next 6 helical transmembrane spans lie at 8–28, 32–52, 66–86, 94–114, 118–138, and 158–178; these read LLTG…LCLG, LGSI…LLGQ, FMLF…SIFF, MLAL…GKLF, IGLT…LVGA, and HLSL…IFGA. RCK C-terminal domains are found at residues 202–288 and 290–373; these read LDND…SFRN and KEVF…RIGF. 5 consecutive transmembrane segments (helical) span residues 383–403, 406–426, 443–463, 477–497, and 541–561; these read LLAF…TFQF, FSFG…LGFL, MVKE…AGAG, IAGL…GAFV, and IANV…PGVV.

This sequence belongs to the AAE transporter (TC 2.A.81) family. YbjL subfamily.

It localises to the cell membrane. The protein is Putative transport protein NT01EI_2530 of Edwardsiella ictaluri (strain 93-146).